Reading from the N-terminus, the 123-residue chain is UPF0102 protein PSPPH_4120 (123 aa).

This sequence belongs to the UPF0102 family.

This chain is UPF0102 protein PSPPH_4120, found in Pseudomonas savastanoi pv. phaseolicola (strain 1448A / Race 6) (Pseudomonas syringae pv. phaseolicola (strain 1448A / Race 6)).